A 196-amino-acid polypeptide reads, in one-letter code: Calcium channel flower (196 aa).

3 helical membrane passes run 36–56 (LGIV…LSII), 67–89 (IIQM…ICIE), and 114–134 (AVPP…GLIF).

Belongs to the calcium channel flower family. As to quaternary structure, homomultimer. Associates with the dally/ magu complex.

It localises to the cell membrane. The protein localises to the cytoplasmic vesicle. It is found in the secretory vesicle. The protein resides in the synaptic vesicle membrane. Its subcellular location is the presynaptic cell membrane. It localises to the endosome. Its activity is regulated as follows. Channel activity is inhibited by La(3+), which reduces Ca(2+) influx and thus inhibits it's function in promoting activity-dependent bulk endocytosis (ADBE) in response to high stimuli. Transmembrane protein which mediates synaptic endocytosis, fitness-based cell culling, neuronal culling, morphogen gradient scaling, and calcium transport. Regulates synaptic endocytosis and hence couples exo- with endocytosis. Controls two major modes of synaptic vesicle (SV) endocytosis in the synaptic boutons of neuromuscular junctions (NMJs); Ca(2+) channel-independent Clathrin-mediated endocytosis (CME) in response to mild stimulation, and Ca(2+) channel-dependent activity-dependent bulk endocytosis (ADBE) in response to strong stimulation. Functions in ADBE and subsequent SV reformation from bulk endosomes by initiating Ca(2+) channel-dependent phosphatidylinositol 4,5-bisphosphate (PtdIns(4,5)P2) compartmentalization in synaptic boutons. There it acts at the periactive zone to provide the low Ca(2+) levels required to initiate Calcineurin activation and upregulate PtdIns(4,5)P2. Conversely PtdIns(4,5)P2 enhances fwe Ca(2+) channel-activity, establishing a positive feedback loop that induces PtdIns(4,5)P2 microdomain at the periactive zone. These microdomains trigger bulk membrane invagination (i.e. ADBE) by triggering actin polymerization while also promoting localization of fwe to bulk endosomes, thereby removing the ADBE trigger to reduce endocytosis and prevent excess membrane uptake. PtdIns(4,5)P2 then promotes SV reformation from the bulk endosomes, to coordinate ADBE and subsequent SV reformation. Different combinations of the flower isoforms at the cell membrane are also required for the identification and elimination of suboptimal or supernumerary cells during development, regeneration, and adulthood. Required for the recognition and elimination of unfit cells in the developing wing during cell competition. In the developing pupal retina, mediates the elimination of unwanted postmitotic neurons, including supernumerary photoreceptor neurons that form at the periphery of the retina and are contained within incomplete ommatidia units. Also required for efficient elimination and replacement of old neurons by newly generated neurons during regeneration in the adult brain following mechanical injury. Downstream of the flower fitness fingerprints, cells identified as unwanted or unfit are eliminated via apoptosis through the expression of ahuizotl (azot). However, the cells marked for elimination by the flower isoforms only undergo apoptosis if additional thresholds are met; (1) their neighboring fit/healthy cells express different levels of the fwe isoforms, and (2) the levels of the protective signal SPARC expressed by the loser or unwanted cells are unable to inhibit caspase activation. These additional thresholds for flower-mediated apoptosis, allows useful cells to recover from transient and limited stress before they are unnecessarily eliminated. Functions with dally and magu in a mechanism of scaling, which utilises apoptosis to ensure that the dpp morphogen gradient, which mediates organ growth, remains proportional to the size of the growing wing. In this mechanism, fwe represses dally- and Magu-dependent activity in expanding the gradient, and dally/Magu inhibits fwe-dependent apoptosis to keep cell death rate low. When the levels of these different proteins are optimally regulated the gradient correctly scales with organ growth but when this fails, fwe-mediated apoptosis is activated to trim the developing tissue to match the correct size of the gradient. The protein is Calcium channel flower of Drosophila virilis (Fruit fly).